Consider the following 196-residue polypeptide: HTH-type transcriptional regulator UidR (196 aa).

The HTH tetR-type domain occupies Gln10 to Ala70. The segment at residues Ser33–Phe52 is a DNA-binding region (H-T-H motif).

Functionally, repressor for the uidRABC (gusRABC) operon. In Escherichia coli O157:H7, this protein is HTH-type transcriptional regulator UidR (uidR).